A 238-amino-acid polypeptide reads, in one-letter code: Large ribosomal subunit protein uL3 (238 aa).

It belongs to the universal ribosomal protein uL3 family. In terms of assembly, part of the 50S ribosomal subunit. Forms a cluster with proteins L14 and L19.

Functionally, one of the primary rRNA binding proteins, it binds directly near the 3'-end of the 23S rRNA, where it nucleates assembly of the 50S subunit. The protein is Large ribosomal subunit protein uL3 of Mesoplasma florum (strain ATCC 33453 / NBRC 100688 / NCTC 11704 / L1) (Acholeplasma florum).